A 537-amino-acid chain; its full sequence is Putative cysteine ligase BshC (537 aa).

Positions 422 to 450 (IEKVEGMIEQQRRLNKDLLDEVAGNQNNI) form a coiled coil.

This sequence belongs to the BshC family.

Involved in bacillithiol (BSH) biosynthesis. May catalyze the last step of the pathway, the addition of cysteine to glucosamine malate (GlcN-Mal) to generate BSH. The polypeptide is Putative cysteine ligase BshC (Staphylococcus aureus (strain COL)).